We begin with the raw amino-acid sequence, 480 residues long: UDP-N-acetylmuramate--L-alanine ligase (480 aa).

Residue 122-128 (GTHGKTT) coordinates ATP.

The protein belongs to the MurCDEF family.

It localises to the cytoplasm. The enzyme catalyses UDP-N-acetyl-alpha-D-muramate + L-alanine + ATP = UDP-N-acetyl-alpha-D-muramoyl-L-alanine + ADP + phosphate + H(+). Its pathway is cell wall biogenesis; peptidoglycan biosynthesis. In terms of biological role, cell wall formation. The polypeptide is UDP-N-acetylmuramate--L-alanine ligase (Pseudomonas aeruginosa (strain LESB58)).